The sequence spans 627 residues: 1-deoxy-D-xylulose-5-phosphate synthase (627 aa).

Thiamine diphosphate contacts are provided by residues histidine 80 and 121–123 (GHS). Aspartate 152 lines the Mg(2+) pocket. Thiamine diphosphate contacts are provided by residues 153–154 (GA), asparagine 181, tyrosine 288, and glutamate 370. Asparagine 181 serves as a coordination point for Mg(2+).

It belongs to the transketolase family. DXPS subfamily. In terms of assembly, homodimer. It depends on Mg(2+) as a cofactor. The cofactor is thiamine diphosphate.

The enzyme catalyses D-glyceraldehyde 3-phosphate + pyruvate + H(+) = 1-deoxy-D-xylulose 5-phosphate + CO2. It functions in the pathway metabolic intermediate biosynthesis; 1-deoxy-D-xylulose 5-phosphate biosynthesis; 1-deoxy-D-xylulose 5-phosphate from D-glyceraldehyde 3-phosphate and pyruvate: step 1/1. Catalyzes the acyloin condensation reaction between C atoms 2 and 3 of pyruvate and glyceraldehyde 3-phosphate to yield 1-deoxy-D-xylulose-5-phosphate (DXP). The chain is 1-deoxy-D-xylulose-5-phosphate synthase from Aliivibrio fischeri (strain MJ11) (Vibrio fischeri).